The primary structure comprises 76 residues: Esculentin-2-ALa (76 aa).

The first 22 residues, 1-22 (MFTLKKSMLLLFFLGTISLSLC), serve as a signal peptide directing secretion. Positions 23-39 (EEERNADEDDGEKEVKR) are excised as a propeptide. Residues C70 and C76 are joined by a disulfide bond.

In terms of tissue distribution, expressed by the skin glands.

The protein resides in the secreted. Functionally, antimicrobial peptide with activity against Gram-positive and Gram-negative bacteria and against fungi. Has been tested against S.aureus (MIC=2.5 ug/mL), B.pumilus (MIC=2.5 ug/mL), B.cereus (MIC=7.5 ug/mL), E.coli (MIC=12.5 ug/mL), B.dysenteriae (MIC=7.5 ug/mL), A.cacoaceticus (MIC=25.0 ug/mL), P.aeruginosa (MIC=50.0 ug/mL) and C.albicans (MIC=2.5 ug/mL). Also shows a weak hemolytic activity. In Amolops loloensis (Lolokou Sucker Frog), this protein is Esculentin-2-ALa.